The chain runs to 679 residues: Enzymatic polyprotein (679 aa).

Residues 40 to 130 (LHCFVDTGAS…LYEPFIQFTD (91 aa)) are protease. D45 is an active-site residue. In terms of domain architecture, Reverse transcriptase spans 272–452 (LKVIKPSKSP…KKINFLGLEI (181 aa)).

It belongs to the caulimoviridae enzymatic polyprotein family.

The catalysed reaction is DNA(n) + a 2'-deoxyribonucleoside 5'-triphosphate = DNA(n+1) + diphosphate. Encodes for at least two polypeptides: protease (PR) and reverse transcriptase (RT). The protease processes the polyprotein in cis. Reverse transcriptase is multifunctional enzyme that converts the viral RNA genome into dsDNA in viral cytoplasmic capsids. This enzyme displays a DNA polymerase activity that can copy either DNA or RNA templates, and a ribonuclease H (RNase H) activity that cleaves the RNA strand of RNA-DNA heteroduplexes in a partially processive 3'- to 5'-endonucleasic mode. Neo-synthesized pregenomic RNA (pgRNA) are encapsidated, and reverse-transcribed inside the nucleocapsid. Partial (+)DNA is synthesized from the (-)DNA template and generates the relaxed circular DNA (RC-DNA) genome. After budding and infection, the RC-DNA migrates in the nucleus, and is converted into a plasmid-like covalently closed circular DNA (cccDNA). This is Enzymatic polyprotein from Cauliflower mosaic virus (strain BBC) (CaMV).